A 481-amino-acid chain; its full sequence is Bifunctional protein GlmU (481 aa).

Positions 1-235 are pyrophosphorylase; that stretch reads MTHKERPLDV…PDEVMGANDR (235 aa). UDP-N-acetyl-alpha-D-glucosamine contacts are provided by residues 13 to 16, Lys27, Gln78, 83 to 84, 107 to 109, Gly146, Glu161, Asn176, and Asn233; these read LAAG, GT, and YGD. A Mg(2+)-binding site is contributed by Asp109. Asn233 provides a ligand contact to Mg(2+). The linker stretch occupies residues 236-256; it reads VQLAQAAAVLRRRINTAHMQA. The tract at residues 257-481 is N-acetyltransferase; that stretch reads GVTLQDPSTI…PWLAGWLERQ (225 aa). Arg339 and Lys357 together coordinate UDP-N-acetyl-alpha-D-glucosamine. His369 (proton acceptor) is an active-site residue. 2 residues coordinate UDP-N-acetyl-alpha-D-glucosamine: Tyr372 and Asn383. Residues Ala386, Ser411, Ala429, and Arg446 each coordinate acetyl-CoA.

The protein in the N-terminal section; belongs to the N-acetylglucosamine-1-phosphate uridyltransferase family. In the C-terminal section; belongs to the transferase hexapeptide repeat family. As to quaternary structure, homotrimer. Mg(2+) is required as a cofactor.

It localises to the cytoplasm. The catalysed reaction is alpha-D-glucosamine 1-phosphate + acetyl-CoA = N-acetyl-alpha-D-glucosamine 1-phosphate + CoA + H(+). The enzyme catalyses N-acetyl-alpha-D-glucosamine 1-phosphate + UTP + H(+) = UDP-N-acetyl-alpha-D-glucosamine + diphosphate. Its pathway is nucleotide-sugar biosynthesis; UDP-N-acetyl-alpha-D-glucosamine biosynthesis; N-acetyl-alpha-D-glucosamine 1-phosphate from alpha-D-glucosamine 6-phosphate (route II): step 2/2. It participates in nucleotide-sugar biosynthesis; UDP-N-acetyl-alpha-D-glucosamine biosynthesis; UDP-N-acetyl-alpha-D-glucosamine from N-acetyl-alpha-D-glucosamine 1-phosphate: step 1/1. It functions in the pathway bacterial outer membrane biogenesis; LPS lipid A biosynthesis. Catalyzes the last two sequential reactions in the de novo biosynthetic pathway for UDP-N-acetylglucosamine (UDP-GlcNAc). The C-terminal domain catalyzes the transfer of acetyl group from acetyl coenzyme A to glucosamine-1-phosphate (GlcN-1-P) to produce N-acetylglucosamine-1-phosphate (GlcNAc-1-P), which is converted into UDP-GlcNAc by the transfer of uridine 5-monophosphate (from uridine 5-triphosphate), a reaction catalyzed by the N-terminal domain. This is Bifunctional protein GlmU from Deinococcus geothermalis (strain DSM 11300 / CIP 105573 / AG-3a).